The chain runs to 173 residues: MTQSEPTEQKRAGRPFPVSWDQFHRDCRALSWRLNELGPFHAVIAITRGGLVPAAIVARELGLRVIDTVCIASYEHDKQGELQVLKGVSDQTATLGGGTGKGLLIIDDLVDTGKTGRMVRSMLPDAHFAAVYAKPKGRPLVDTFITEVSQDTWIFFPWDTGLSFQPPLKDGAG.

5-phospho-alpha-D-ribose 1-diphosphate contacts are provided by residues 48–49 and 107–115; these read RG and DDLVDTGKT. Asp108 lines the Mg(2+) pocket. Asp111 and Ile154 together coordinate guanine. Positions 111 and 154 each coordinate xanthine. GMP-binding positions include 111-115 and 153-154; these read DTGKT and WI.

The protein belongs to the purine/pyrimidine phosphoribosyltransferase family. XGPT subfamily. Homotetramer. Mg(2+) is required as a cofactor.

The protein resides in the cell inner membrane. It catalyses the reaction GMP + diphosphate = guanine + 5-phospho-alpha-D-ribose 1-diphosphate. The enzyme catalyses XMP + diphosphate = xanthine + 5-phospho-alpha-D-ribose 1-diphosphate. The catalysed reaction is IMP + diphosphate = hypoxanthine + 5-phospho-alpha-D-ribose 1-diphosphate. It functions in the pathway purine metabolism; GMP biosynthesis via salvage pathway; GMP from guanine: step 1/1. The protein operates within purine metabolism; XMP biosynthesis via salvage pathway; XMP from xanthine: step 1/1. Functionally, purine salvage pathway enzyme that catalyzes the transfer of the ribosyl-5-phosphate group from 5-phospho-alpha-D-ribose 1-diphosphate (PRPP) to the N9 position of the 6-oxopurines guanine and xanthine to form the corresponding ribonucleotides GMP (guanosine 5'-monophosphate) and XMP (xanthosine 5'-monophosphate), with the release of PPi. To a lesser extent, also acts on hypoxanthine. The polypeptide is Xanthine-guanine phosphoribosyltransferase (Rhodopseudomonas palustris (strain ATCC BAA-98 / CGA009)).